The primary structure comprises 87 residues: Phosphoribosyl-ATP pyrophosphatase (87 aa).

This sequence belongs to the PRA-PH family.

The protein resides in the cytoplasm. It catalyses the reaction 1-(5-phospho-beta-D-ribosyl)-ATP + H2O = 1-(5-phospho-beta-D-ribosyl)-5'-AMP + diphosphate + H(+). Its pathway is amino-acid biosynthesis; L-histidine biosynthesis; L-histidine from 5-phospho-alpha-D-ribose 1-diphosphate: step 2/9. This Corynebacterium diphtheriae (strain ATCC 700971 / NCTC 13129 / Biotype gravis) protein is Phosphoribosyl-ATP pyrophosphatase.